Reading from the N-terminus, the 705-residue chain is GATOR2 complex protein WDR24 (705 aa).

6 WD repeats span residues 1–28, 34–74, 77–117, 121–161, 165–207, and 211–254; these read MDEN…RNKQ, EHKR…SVST, GQSE…RYER, AHNG…AKEI, QTIA…IPSA, and EHKD…IDRA. Residues 633–655 form a C4-type zinc finger; the sequence is NCSNCKRPMSNRGWICDRCRQCA. The Zn(2+) site is built by cysteine 634, cysteine 637, cysteine 648, cysteine 651, cysteine 658, cysteine 661, cysteine 672, cysteine 675, histidine 677, histidine 680, histidine 683, cysteine 694, cysteine 698, histidine 700, and cysteine 702. The RING-type; atypical zinc finger occupies 656-705; that stretch reads SMCAVCHHVVKGLFVWCQGCSHGGHLQHIMKWLETSSHCPAGCGHLCEYT.

This sequence belongs to the WD repeat WDR24 family. As to quaternary structure, component of the GATOR2 subcomplex, composed of MIOS, SEC13, SEH1L, WDR24 and WDR59. The GATOR2 complex interacts with CASTOR1 and CASTOR2; the interaction is negatively regulated by arginine. The GATOR2 complex interacts with SESN1, SESN2 and SESN3; the interaction is negatively regulated by amino acids.

The protein localises to the lysosome membrane. It catalyses the reaction S-ubiquitinyl-[E2 ubiquitin-conjugating enzyme]-L-cysteine + [acceptor protein]-L-lysine = [E2 ubiquitin-conjugating enzyme]-L-cysteine + N(6)-ubiquitinyl-[acceptor protein]-L-lysine.. The protein operates within protein modification; protein ubiquitination. With respect to regulation, the GATOR2 complex is negatively regulated by the upstream amino acid sensors CASTOR1 and SESN2, which sequester the GATOR2 complex in absence of amino acids. In the presence of abundant amino acids, GATOR2 is released from CASTOR1 and SESN2 and activated. Catalytic component of the GATOR2 complex, a multiprotein complex that acts as an activator of the amino acid-sensing branch of the mTORC1 signaling pathway. The GATOR2 complex indirectly activates mTORC1 through the inhibition of the GATOR1 subcomplex. GATOR2 probably acts as an E3 ubiquitin-protein ligase toward GATOR1. In the presence of abundant amino acids, the GATOR2 complex mediates ubiquitination of the NPRL2 core component of the GATOR1 complex, leading to GATOR1 inactivation. In the absence of amino acids, GATOR2 is inhibited, activating the GATOR1 complex. In addition to its role in regulation of the mTORC1 complex, promotes the acidification of lysosomes and facilitates autophagic flux. Within the GATOR2 complex, WDR24 constitutes the catalytic subunit that mediates 'Lys-6'-linked ubiquitination of NPRL2. This chain is GATOR2 complex protein WDR24, found in Gallus gallus (Chicken).